A 206-amino-acid polypeptide reads, in one-letter code: MVHYKLVYFPLRARAEIARQIFAYAGQDYSEENLSFEQWPARKNNTPFGQLPILEVDGKPLGQSYAIARYLAREFGIAGQNDTEAAEVDAIADQFKDYLNDVSPYLTVLAGFKPGDKDQLRTDVFVPAFKKNFEFFENILASNHSGFFVGNSLTWVDLLISQHVQDILDKDLAVVEEFKKVLAHRKKVQSIDRIQKYIANRPDYPF.

A GST N-terminal domain is found at 2 to 79 (VHYKLVYFPL…YLAREFGIAG (78 aa)). Residues tyrosine 8, tryptophan 39, lysine 43, 49 to 51 (GQL), and 63 to 64 (QS) contribute to the glutathione site. In terms of domain architecture, GST C-terminal spans 81–206 (NDTEAAEVDA…YIANRPDYPF (126 aa)).

The protein belongs to the GST superfamily. Sigma family.

The catalysed reaction is RX + glutathione = an S-substituted glutathione + a halide anion + H(+). In terms of biological role, conjugation of reduced glutathione to a wide number of exogenous and endogenous hydrophobic electrophiles. The polypeptide is Probable glutathione S-transferase 6 (gst-6) (Caenorhabditis elegans).